Here is a 184-residue protein sequence, read N- to C-terminus: MRAFIAIDVSESVRDALVRAQDYIGSKEAKIKFVERENFHITLKFLGEITEEQAEEIKKILEKIAKKYKKHEVNVRGIGVFPNPNYVRVIWAGVENDEIIKKIAKEIDDELAKLGFKKEGNFVAHITLGRVKFVKDKLGLAMKLKELANEDFGSFIVEAIELKKSTLTPKGPIYETLARFELSE.

Catalysis depends on His40, which acts as the Proton donor. 2 short sequence motifs (HXTX) span residues 40–43 (HITL) and 125–128 (HITL). The active-site Proton acceptor is His125.

This sequence belongs to the 2H phosphoesterase superfamily. ThpR family.

It carries out the reaction a 3'-end 2',3'-cyclophospho-ribonucleotide-RNA + H2O = a 3'-end 2'-phospho-ribonucleotide-RNA + H(+). Its function is as follows. Hydrolyzes RNA 2',3'-cyclic phosphodiester to an RNA 2'-phosphomonoester. In vitro, ligates 5' and 3' half-tRNA molecules with 2',3'-cyclic phosphate and 5'-hydroxyl termini, respectively, to the product containing the 2'-5' phosphodiester linkage. Ligase activity requires GTP, but GTP hydrolysis is not required for the reaction, which is reversible. Ligase activity is weak compared to the phosphodiesterase activity. The polypeptide is RNA 2',3'-cyclic phosphodiesterase (Pyrococcus furiosus (strain ATCC 43587 / DSM 3638 / JCM 8422 / Vc1)).